We begin with the raw amino-acid sequence, 456 residues long: MSNSAMSVVILAAGKGTRMYSDLPKVLHTLAGKPMVQHVIDAANDLGACAVHLVYGHGGDLLRQTLHEDNLNWVLQAEQLGTGHAMQQAAPFFNDDEDILMLYGDVPLISVETLQRLRAAKPQGGIGLLTVKLDDPTGYGRITRENGQVTGIVEHKDASEAQRQIQEINTGILIAGGADLKRWLAKLTNNNAQGEYYITDIIAMAHQEGHQIVAVHPQRLSEVEGVNNRLQLARLERVYQAEQAEKLLLAGVMLRDPARFDLRGTLQHGRDVEIDTNVILEGNVVLGDRVKIGAGCVIKNSTIGDDCEISPYSVVEDAQLQAACTIGPFARLRPGAELLEGAHVGNFVEMKKARLGKGSKAGHLTYLGDAEIGDNVNIGAGTITCNYDGANKHKTIIGDDVFVGSDTQLVAPVTVGNGVTIAAGTTVTRNIADNELVLSRVPQVHKQGWQRPVKKK.

The segment at 1-229 is pyrophosphorylase; sequence MSNSAMSVVI…LSEVEGVNNR (229 aa). Residues 11–14, K25, Q76, 81–82, 103–105, G140, E154, N169, and N227 each bind UDP-N-acetyl-alpha-D-glucosamine; these read LAAG, GT, and YGD. Position 105 (D105) interacts with Mg(2+). N227 contacts Mg(2+). Positions 230–250 are linker; it reads LQLARLERVYQAEQAEKLLLA. Residues 251-456 form an N-acetyltransferase region; the sequence is GVMLRDPARF…QGWQRPVKKK (206 aa). R333 and K351 together coordinate UDP-N-acetyl-alpha-D-glucosamine. H363 serves as the catalytic Proton acceptor. Positions 366 and 377 each coordinate UDP-N-acetyl-alpha-D-glucosamine. Residues A380, 386–387, S405, A423, and R440 contribute to the acetyl-CoA site; that span reads NY.

The protein in the N-terminal section; belongs to the N-acetylglucosamine-1-phosphate uridyltransferase family. It in the C-terminal section; belongs to the transferase hexapeptide repeat family. As to quaternary structure, homotrimer. It depends on Mg(2+) as a cofactor.

The protein localises to the cytoplasm. It carries out the reaction alpha-D-glucosamine 1-phosphate + acetyl-CoA = N-acetyl-alpha-D-glucosamine 1-phosphate + CoA + H(+). The enzyme catalyses N-acetyl-alpha-D-glucosamine 1-phosphate + UTP + H(+) = UDP-N-acetyl-alpha-D-glucosamine + diphosphate. It functions in the pathway nucleotide-sugar biosynthesis; UDP-N-acetyl-alpha-D-glucosamine biosynthesis; N-acetyl-alpha-D-glucosamine 1-phosphate from alpha-D-glucosamine 6-phosphate (route II): step 2/2. The protein operates within nucleotide-sugar biosynthesis; UDP-N-acetyl-alpha-D-glucosamine biosynthesis; UDP-N-acetyl-alpha-D-glucosamine from N-acetyl-alpha-D-glucosamine 1-phosphate: step 1/1. It participates in bacterial outer membrane biogenesis; LPS lipid A biosynthesis. Functionally, catalyzes the last two sequential reactions in the de novo biosynthetic pathway for UDP-N-acetylglucosamine (UDP-GlcNAc). The C-terminal domain catalyzes the transfer of acetyl group from acetyl coenzyme A to glucosamine-1-phosphate (GlcN-1-P) to produce N-acetylglucosamine-1-phosphate (GlcNAc-1-P), which is converted into UDP-GlcNAc by the transfer of uridine 5-monophosphate (from uridine 5-triphosphate), a reaction catalyzed by the N-terminal domain. In Klebsiella pneumoniae subsp. pneumoniae (strain ATCC 700721 / MGH 78578), this protein is Bifunctional protein GlmU.